The chain runs to 89 residues: Small ribosomal subunit protein uS15 (89 aa).

The tract at residues 1-24 (MSLNAETKAGIVEKYRRDPSDTGS) is disordered. Positions 11 to 20 (IVEKYRRDPS) are enriched in basic and acidic residues.

The protein belongs to the universal ribosomal protein uS15 family. Part of the 30S ribosomal subunit. Forms a bridge to the 50S subunit in the 70S ribosome, contacting the 23S rRNA.

In terms of biological role, one of the primary rRNA binding proteins, it binds directly to 16S rRNA where it helps nucleate assembly of the platform of the 30S subunit by binding and bridging several RNA helices of the 16S rRNA. Functionally, forms an intersubunit bridge (bridge B4) with the 23S rRNA of the 50S subunit in the ribosome. The polypeptide is Small ribosomal subunit protein uS15 (Thioalkalivibrio sulfidiphilus (strain HL-EbGR7)).